A 216-amino-acid polypeptide reads, in one-letter code: Acyl-homoserine-lactone synthase (216 aa).

Belongs to the autoinducer synthase family.

The catalysed reaction is a fatty acyl-[ACP] + S-adenosyl-L-methionine = an N-acyl-L-homoserine lactone + S-methyl-5'-thioadenosine + holo-[ACP] + H(+). Its function is as follows. Required for the synthesis of an acyl-HSL autoinducer that binds to YukR and which is involved in the regulation of motility and morphology. This chain is Acyl-homoserine-lactone synthase (yukI), found in Yersinia ruckeri.